The sequence spans 265 residues: Undecaprenyl-diphosphatase 1 (265 aa).

The next 7 helical transmembrane spans lie at 4-24 (IIIA…PISS), 42-62 (AKTF…ILYH), 84-104 (FHVF…HDVI), 108-128 (LFQP…MILA), 184-204 (SEFS…LDLL), 217-237 (MFAV…VTFL), and 245-265 (LKPF…FVLL).

Belongs to the UppP family.

It is found in the cell membrane. The catalysed reaction is di-trans,octa-cis-undecaprenyl diphosphate + H2O = di-trans,octa-cis-undecaprenyl phosphate + phosphate + H(+). Functionally, catalyzes the dephosphorylation of undecaprenyl diphosphate (UPP). Confers resistance to bacitracin. This is Undecaprenyl-diphosphatase 1 from Bacillus cereus (strain ZK / E33L).